The following is a 1092-amino-acid chain: Myelin regulatory factor (1092 aa).

Residues 1–730 (MDVEDENETL…CVSQRFLQAT (730 aa)) are Cytoplasmic-facing. 3 disordered regions span residues 145 to 168 (SYAAGTLPDSPPDSGSEAYSPQQL), 187 to 210 (PPSRLEHPPPPHLQGPLPPHSIHQ), and 258 to 282 (QQHGAELPVHPSKKRKHSDSPTNTL). Positions 196–205 (PPHLQGPLPP) are enriched in pro residues. The segment at residues 246–507 (AQQSQMLHQL…SNPGQFESDS (262 aa)) is a DNA-binding region (NDT80). Residues 553-662 (SDIRAKESVE…KLTDNLETRI (110 aa)) form the Peptidase S74 domain. The stretch at 646 to 677 (GAVKELCKLTDNLETRIDELERWSHKLAKLRR) forms a coiled coil. The span at 681 to 695 (MKSTNSHTGSSQFSR) shows a compositional bias: polar residues. The interval 681–714 (MKSTNSHTGSSQFSRAGSVPYKQRPPKVMGKTVP) is disordered. A helical transmembrane segment spans residues 731-751 (IIALVIIMAFSVISMTTLYVL). Over 752–1092 (NLRSEDDMLG…YYFRFYRLCD (341 aa)) the chain is Lumenal. Disordered stretches follow at residues 798–817 (TTQLKGNTTPPPKITKSPDW) and 849–945 (ITRK…DSRY). 2 stretches are compositionally biased toward polar residues: residues 849–867 (ITRKTSAASAETISQTDPA) and 928–945 (TPITPMDRTQGNSNDSRY). N-linked (GlcNAc...) asparagine glycosylation is found at Asn941, Asn961, Asn974, and Asn996.

It belongs to the MRF family. In terms of assembly, homotrimer. Follows autocatalytic cleavage via the peptidase S74 domain. Autoprocessing is apparently constitutive and is essential for transcriptional activity.

The protein resides in the endoplasmic reticulum membrane. It localises to the nucleus. The protein localises to the cytoplasm. In terms of biological role, constitutes a precursor of the transcription factor. Mediates the autocatalytic cleavage that releases the Myelin regulatory factor, N-terminal component that specifically activates transcription of central nervous system (CNS) myelin genes. Membrane-bound part that has no transcription factor activity and remains attached to the endoplasmic reticulum membrane following cleavage. Functionally, transcription factor that specifically activates expression of myelin genes during oligodendrocyte (OL) maturation, thereby playing a central role in oligodendrocyte maturation and CNS myelination. This Xenopus laevis (African clawed frog) protein is Myelin regulatory factor (myrf).